A 659-amino-acid polypeptide reads, in one-letter code: Protein phosphatase Slingshot homolog 3 (659 aa).

Residues 1–16 show a composition bias toward polar residues; that stretch reads MALVTVSRSPPGSGAS. The interval 1–31 is disordered; that stretch reads MALVTVSRSPPGSGASTPVGPWDQAVQRRSR. Position 2 is an N-acetylalanine (Ala2). Residues Ser9 and Ser37 each carry the phosphoserine modification. The interval 46–96 is disordered; the sequence is LGLQDGGDNDDAAEASSEPTEKAPSEEELHGDQTDFGQGSQSPQKQEEQRQ. The span at 64 to 78 shows a compositional bias: basic and acidic residues; it reads PTEKAPSEEELHGDQ. Polar residues predominate over residues 80–89; it reads DFGQGSQSPQ. Phosphoserine occurs at positions 85 and 87. The DEK-C domain occupies 269-324; that stretch reads EQMEQAIRAELWKVLDVSDLESVTSKEIRQALELRLGLPLQQYRDFIDNQMLLLVA. The Tyrosine-protein phosphatase domain maps to 328 to 469; sequence RASRIFPHLY…LQIYQGILTA (142 aa). Cys413 acts as the Phosphocysteine intermediate in catalysis. Disordered regions lie at residues 482 to 534, 547 to 603, and 617 to 638; these read GVSP…RINL, SLEL…RQSV, and QAFQEQEQGQGQGQGEPCISST. Low complexity predominate over residues 547-557; that stretch reads SLELESTSETS.

Belongs to the protein-tyrosine phosphatase family. In terms of assembly, does not bind to, or colocalize with, filamentous actin.

The protein resides in the cytoplasm. Its subcellular location is the cytoskeleton. The protein localises to the nucleus. The catalysed reaction is O-phospho-L-tyrosyl-[protein] + H2O = L-tyrosyl-[protein] + phosphate. It catalyses the reaction O-phospho-L-seryl-[protein] + H2O = L-seryl-[protein] + phosphate. The enzyme catalyses O-phospho-L-threonyl-[protein] + H2O = L-threonyl-[protein] + phosphate. In terms of biological role, protein phosphatase which may play a role in the regulation of actin filament dynamics. Can dephosphorylate and activate the actin binding/depolymerizing factor cofilin, which subsequently binds to actin filaments and stimulates their disassembly. In Homo sapiens (Human), this protein is Protein phosphatase Slingshot homolog 3 (SSH3).